The chain runs to 273 residues: Shikimate dehydrogenase (NADP(+)) (273 aa).

Shikimate is bound by residues 18 to 20 (SKS) and Thr65. The Proton acceptor role is filled by Lys69. Glu81 serves as a coordination point for NADP(+). 2 residues coordinate shikimate: Asn90 and Asp105. NADP(+)-binding positions include 130–134 (GAGGA), 154–159 (NRTHSK), and Met217. Tyr219 is a binding site for shikimate. Gly240 is a binding site for NADP(+).

This sequence belongs to the shikimate dehydrogenase family. As to quaternary structure, homodimer.

The catalysed reaction is shikimate + NADP(+) = 3-dehydroshikimate + NADPH + H(+). It functions in the pathway metabolic intermediate biosynthesis; chorismate biosynthesis; chorismate from D-erythrose 4-phosphate and phosphoenolpyruvate: step 4/7. Its function is as follows. Involved in the biosynthesis of the chorismate, which leads to the biosynthesis of aromatic amino acids. Catalyzes the reversible NADPH linked reduction of 3-dehydroshikimate (DHSA) to yield shikimate (SA). The polypeptide is Shikimate dehydrogenase (NADP(+)) (Herminiimonas arsenicoxydans).